The following is a 91-amino-acid chain: Beta-microseminoprotein (91 aa).

Disulfide bonds link Cys2-Cys54, Cys22-Cys46, Cys41-Cys75, Cys44-Cys53, and Cys68-Cys88.

As to expression, expressed in ciliated epithelium of nidamental gland and in secretory-like cells in accessory nidamental gland (at protein level). Expressed in ovary, nidamental gland and accessory nidamental gland.

It is found in the secreted. Functionally, acts as a pheromone. Triggers aggressive behaviors in males such as fin beating, lunging and grabbing. These behaviors form part of the competition for fertile females. The sequence is that of Beta-microseminoprotein from Doryteuthis pealeii (Longfin inshore squid).